A 467-amino-acid polypeptide reads, in one-letter code: UDP-N-acetylmuramate--L-alanine ligase (467 aa).

114 to 120 is a binding site for ATP; it reads GTHGKTT.

It belongs to the MurCDEF family.

It is found in the cytoplasm. It carries out the reaction UDP-N-acetyl-alpha-D-muramate + L-alanine + ATP = UDP-N-acetyl-alpha-D-muramoyl-L-alanine + ADP + phosphate + H(+). Its pathway is cell wall biogenesis; peptidoglycan biosynthesis. Cell wall formation. The sequence is that of UDP-N-acetylmuramate--L-alanine ligase from Nitrobacter hamburgensis (strain DSM 10229 / NCIMB 13809 / X14).